Reading from the N-terminus, the 106-residue chain is N(4)-acetylcytidine amidohydrolase (106 aa).

The ASCH domain maps to 9–105 (TFFEFLTPLI…ELYVIEYELI (97 aa)). Lys23 serves as the catalytic Proton acceptor. The active-site Nucleophile is the Thr26. The active-site Proton donor is Glu76.

Belongs to the N(4)-acetylcytidine amidohydrolase family.

It carries out the reaction N(4)-acetylcytidine + H2O = cytidine + acetate + H(+). The catalysed reaction is N(4)-acetyl-2'-deoxycytidine + H2O = 2'-deoxycytidine + acetate + H(+). The enzyme catalyses N(4)-acetylcytosine + H2O = cytosine + acetate + H(+). Functionally, catalyzes the hydrolysis of N(4)-acetylcytidine (ac4C). The protein is N(4)-acetylcytidine amidohydrolase of Vibrio campbellii (strain ATCC BAA-1116).